A 2849-amino-acid chain; its full sequence is MNEMRTQVRIEFHALATQRKPSASPPTIEEDMGQGCTLEALVIPSRRAEQSTQHPDSSFMATVRGAKSVVVSQWQLLQAGSAGSAARPDGSGSESLAASSSWKPRRRLEAGGPCRSWLVFLVSREGWSDSNPGYRKQFICRPQEIGFHSEEHREAGTMAAKPPKKSSIPGVSIRQLVDEIPEGCSTPDFKQKPVTLALPEGKNAIFRAVVCGEPRPEVHWQSSKGDLSNSAKYQISSAPGREEHVLQINKLTGEDSDLYRCTALNAYGEATCSVRLTVIEVGFRKNRKRQKEPQEDLRKELMDFRKMLKKRAPPPTPEKKMESEQVWQLLVTADRKDYEKICMQYGIVDFRGMLRKLQEMKKEQEDRMAQYVSAIANLRHIKVTKEGVATFDLELDLKNLESKIYLYKDGEMIPYGVDNQTKHCLRRLGKRYHFQIQDLRPEDAGLYQVMVEDAVVFSTELESRTIPPRVVVPLAETRCEERGDAVFECTLSNPCPSATWHFQHRPLRLSDKYEVFVSPDGLTHRLVVKGASSSDMGLYSLNTGLHASSAWLVVEGGKDKGPQTTDTDHRLQTPEALASEAEDAGGISIKGGQSRERGSLKEISGAQLTAGPDRGAFGKHGYPLVVDEDIVNSTWGPGQDKKSFLEGGQLRVTLPGDSQSQREGDCGRSLPRRSHLQGEDTESDLGFLERGQQGPGRVDSENGRWETAGGQSAGSSHPRDRRLESRGEGQEHSEGHGSELDRYGQGQCHDPQLGAGAGQRVPWGSQFDAEGLQLKKEGTEMWGDCLDVTEGRGNLRKERGTAAGSSNRARLWEARGGSGAGSPCVPEFPRGGAHSSKAGMGPECWPGGDAGHGEAGVYWGAGGYPGQTSEGNDTQKSSLSGDRKLLGCTSPEAKAEGSFQSADGHGIVGRVYKPGPEGPEDLRSQKSGLQEIQGRNGQGSAGALGRTVEGSRSLQFPQSWTVGQREAGKPGGAEYEDIGPQDDTWSNLREMGGHCGSGVLASGGREGSVGGSQVAALMMSSQRVDARNHRLVTSPGLGVQGSGRTLGHMEGLRDPEAVGSEEEFWNGSGRSQGKGSRGGMGLGGPEWAESRNEEGWENSEGMASRNGATCRDGSRMQEGTGSGPDIGCKAPCGAPAETESGKWGTYSHDSGVPGGLWSGSKSQCSPAGKVSGREASLRNGSAGLHGMPSSEAQQRDVFQGHGQTGHIGEHHCARGLGSSETVGSVGGHGRKDSGTAGKVGEGYTEAEPGHSGGLSSWGHTGDYEDFRVLGAFREGDFGNGTGVPLSMGPRSLERGDKEGDGERISFLGARTSTVGTGNWDKARHPGAPSPHEAGSEGHWAQVSGNALGCRDGSGIPEPWSAGDKTAYGEESKGLGPERTGPDGEVAFRGSSSSLRGMGPASEASYKSGTWGPGAVGSGFKVDCRNDLGCSGSMGSESKAGYKNKIESHGVRELGDLTGYKNDLGPSELISSRNEARGLEHSGDILSWNKAGLRDGLGETGRMESKNGVGYRGSSVGPGEMGSERKMHLADGSGRLGGPGSLAAPKEHESVGLGSVYEGAAEIGSKYNREKVRGMGFRDATGPEVGSGVAGMLDITGGIAHGDSAMGTEKLGTPDRPYILSGGQGTKNSLGGCVSLGIPDALGAVGSVGKPGIREWKDDSGFQGSLRDRGTPSEEIRSVDQAGAIGTSRLLDSRGAVEDGSGSENDFDFNKSGLETTGRCRVADQQGVTPQGCGGSLLNGRRKGTSSGSLSGVGQEVDRSSTPGRETKVMSGPGSGRATSHTRAADWEDGVQCSFGASSSLPDTDAIFRETHAGQGAFKGRGCETGQGAAGECQGPRSLGSRGSEFVGGRAGFTGSSSVPGRRDSTIYGDAVTSKPQEPQNELYSPLGRRDFKSVSGGIQEPGFQRGTGQGEGKESFQESGSWEAELDEVQGSRASAKFENQGGKDPGWSGQKPGPCGSRHQVQSGTEVGSAKRATPQGAGGLEPWAGSEDRGSLREPWSEDRRQGPHRHLGSRRDTQEGRSDVCGQAQDATQSPRSRYQPGTGRSSSEARGSMDHFSQGLTDTEVQLGEAAIVSCTLASDLGPGTWFKDGVKLTAQDGVIFEQDGLTHRLILTHVEGTQAGKYTFVAGCQHSEASLTVQDPPTIAPDVTETLREPLVFKAGKPVTVKIPFQSRLPVQAAWRKDGNEVVGGDHKGIQLALADGYTWLCLPSVCRKDSGRYSVTLRSEGGCVQAEFTLQVIDKPQPPQGPLEVQDCHRAGVCLRWLPPRDNGGQVIQHYVVERRQAGRSTWLKVGEPPSDSTSFTDTSVEQGKKYAFRVRAVTSVGAGDALESEEVLVAPEALPGPPSAPAILSASSQSITLTWGAPQGPGSNHILGYLIEKHKKGSNTWMAVNEQPVSERRYTVVGLRQGCQYEFRVTAVTLSGPGDPGPPSDAVFARDPMRPPGPVRDLQVTDTSNTSITVSWMVPDARDADEAQGYIVELCGSDSHQWSPCHVGTVPGTTFTAKGLRPQEGYFVRVTAVNDGGRSQATSLDTLVHAMPATVCPRFLMDSGTKDTLMVRVGDSIRVPLSFEAAPMPEVTWLKDGLPLPKRSVTTVKAGLTQLLIPAASLSDCGRYTVMLRNLQGKEATHSFFINVAACPQAPGSIYLQENVPGTVTVQWEPSPDEAQGIPLHYTVLMRSSSHRSWHEVADHVRTNRFTLLGVLPGHEYHFRVLAKNELGVSKPSDTSQPWCIPRQRDRFTVKSPTYQDPDLSQKPRFLVGLRAHLLPQGCECRMTCAVQGSPQPHVTWFKNDQSLDRNPAVYSTDLLGVCSLVIPSVSLKDSGEYKAVAKNPLGQAVSTATLIVTEYDS.

Positions A82–L108 are disordered. A compositionally biased stretch (low complexity) spans G90–S101. The 91-residue stretch at P187–T277 folds into the Ig-like 1 domain. The stretch at I347–H380 forms a coiled coil. The Ig-like 2 domain maps to P468–G557. Disordered regions lie at residues L577–L600, V652–R760, Y864–S924, V962–Q981, E1061–A1103, T1221–G1258, S1312–H1338, R1350–E1384, E1498–E1523, E1654–I1675, Q1724–H1780, and G1827–H2055. A compositionally biased stretch (basic and acidic residues) spans H717–R742. Over residues G866–S880 the composition is skewed to polar residues. Residues R1070–G1084 show a composition bias toward gly residues. A compositionally biased stretch (polar residues) spans S1873 to L1882. Composition is skewed to basic and acidic residues over residues S1988–Q2004 and S2012–S2021. Positions P2034 to T2137 constitute an Ig-like 3 domain. 3 Fibronectin type-III domains span residues P2244–E2339, P2344–P2443, and P2445–A2540. Positions P2544–T2628 constitute an Ig-like 4 domain. The 95-residue stretch at A2641–Q2735 folds into the Fibronectin type-III 4 domain. An Ig-like 5 domain is found at P2749 to T2845.

In terms of assembly, interacts with FLNC. Interacts with KY. Isoform 1, isoform 3 and isoform 4 are expressed in skeletal muscle while isoform 2 is detected in both skeletal muscle and heart (at protein level).

It is found in the nucleus. Its subcellular location is the cytoplasm. The protein resides in the myofibril. The protein localises to the sarcomere. It localises to the z line. The sequence is that of Immunoglobulin-like and fibronectin type III domain-containing protein 1 (Igfn1) from Mus musculus (Mouse).